The sequence spans 384 residues: MSQDLSLQKFGFIKRDTPRTVNLDPLQTGGLLTPEAREALLEWGDGYSVCDYCGGMLDQIKTPPIFDFVHKSLPSFIGMDHARVTNGARESKFAIMHAMTSPGDWIVMDGNAHYSSIVAAQRARLNVKLVPKTPAPDYKITPEAYAAAIEEVKQQSGKPPALALLTYPDGSYGNLADAKAITNLAHDFGVPIIINGAYAIGRMPFKGKDLGADFVAGSGHKSMAASGPVGVLGVNEQYAAKVLQKSPTHKNKEIEFLGCTARGATIMTMIASFPAVVERTKPESWEKEVSNARWFSEQMESIGMKQLGDKPHNHDLMFFEGTVFYDISQKTDRYFLYRELKEKSIHGIKPGLTKNFKLSTLGVGREKLGFVMDTLKDIIKKYDG.

Pyridoxal 5'-phosphate contacts are provided by residues 88 to 89 (AR), Asn-195, and 218 to 220 (SGH). An N6-(pyridoxal phosphate)lysine modification is found at Lys-221.

It belongs to the SepCysS family. In terms of assembly, homodimer. Interacts with SepRS. Requires pyridoxal 5'-phosphate as cofactor.

It catalyses the reaction O-phospho-L-seryl-tRNA(Cys) + hydrogen sulfide + H(+) = L-cysteinyl-tRNA(Cys) + phosphate. Functionally, converts O-phospho-L-seryl-tRNA(Cys) (Sep-tRNA(Cys)) to L-cysteinyl-tRNA(Cys) (Cys-tRNA(Cys)). This Methanocella arvoryzae (strain DSM 22066 / NBRC 105507 / MRE50) protein is O-phospho-L-seryl-tRNA:Cys-tRNA synthase 1.